The chain runs to 614 residues: Dihydroxy-acid dehydratase 1 (614 aa).

Asp81 serves as a coordination point for Mg(2+). Residue Cys122 coordinates [2Fe-2S] cluster. Mg(2+)-binding residues include Asp123 and Lys124. Lys124 is subject to N6-carboxylysine. Cys195 contributes to the [2Fe-2S] cluster binding site. Glu491 is a Mg(2+) binding site. The active-site Proton acceptor is Ser517.

This sequence belongs to the IlvD/Edd family. In terms of assembly, homodimer. It depends on [2Fe-2S] cluster as a cofactor. The cofactor is Mg(2+).

The catalysed reaction is (2R)-2,3-dihydroxy-3-methylbutanoate = 3-methyl-2-oxobutanoate + H2O. It catalyses the reaction (2R,3R)-2,3-dihydroxy-3-methylpentanoate = (S)-3-methyl-2-oxopentanoate + H2O. It functions in the pathway amino-acid biosynthesis; L-isoleucine biosynthesis; L-isoleucine from 2-oxobutanoate: step 3/4. Its pathway is amino-acid biosynthesis; L-valine biosynthesis; L-valine from pyruvate: step 3/4. Functions in the biosynthesis of branched-chain amino acids. Catalyzes the dehydration of (2R,3R)-2,3-dihydroxy-3-methylpentanoate (2,3-dihydroxy-3-methylvalerate) into 2-oxo-3-methylpentanoate (2-oxo-3-methylvalerate) and of (2R)-2,3-dihydroxy-3-methylbutanoate (2,3-dihydroxyisovalerate) into 2-oxo-3-methylbutanoate (2-oxoisovalerate), the penultimate precursor to L-isoleucine and L-valine, respectively. This chain is Dihydroxy-acid dehydratase 1, found in Mesorhizobium japonicum (strain LMG 29417 / CECT 9101 / MAFF 303099) (Mesorhizobium loti (strain MAFF 303099)).